The primary structure comprises 155 residues: Protein-export protein SecB (155 aa).

Belongs to the SecB family. In terms of assembly, homotetramer, a dimer of dimers. One homotetramer interacts with 1 SecA dimer.

It localises to the cytoplasm. Its function is as follows. One of the proteins required for the normal export of preproteins out of the cell cytoplasm. It is a molecular chaperone that binds to a subset of precursor proteins, maintaining them in a translocation-competent state. It also specifically binds to its receptor SecA. The polypeptide is Protein-export protein SecB (Cronobacter sakazakii (strain ATCC BAA-894) (Enterobacter sakazakii)).